Here is a 410-residue protein sequence, read N- to C-terminus: Protein translocase subunit SecY 2 (410 aa).

10 helical membrane passes run 2–22, 45–65, 94–114, 125–145, 147–167, 188–208, 241–261, 284–304, 339–359, and 366–386; these read ILII…SAAL, FSIM…VQLL, LTLV…NTLT, FTII…MWLG, LITE…GILV, WIRF…IVWF, VIPV…LMFF, GVII…IVQI, YLSL…LLVA, and LQIG…IEIG.

It belongs to the SecY/SEC61-alpha family. Component of the Sec protein translocase complex. Heterotrimer consisting of SecY, SecE and SecG subunits. The heterotrimers can form oligomers, although 1 heterotrimer is thought to be able to translocate proteins. Interacts with the ribosome. Interacts with SecDF, and other proteins may be involved. Interacts with SecA.

The protein resides in the cell membrane. Its function is as follows. The central subunit of the protein translocation channel SecYEG. Consists of two halves formed by TMs 1-5 and 6-10. These two domains form a lateral gate at the front which open onto the bilayer between TMs 2 and 7, and are clamped together by SecE at the back. The channel is closed by both a pore ring composed of hydrophobic SecY resides and a short helix (helix 2A) on the extracellular side of the membrane which forms a plug. The plug probably moves laterally to allow the channel to open. The ring and the pore may move independently. The protein is Protein translocase subunit SecY 2 of Lactobacillus kefiranofaciens subsp. kefiranofaciens.